The following is a 101-amino-acid chain: Apolipoprotein C-II (101 aa).

The N-terminal stretch at 1–22 (MGARHLLALLLVLLVLGFEVQG) is a signal peptide. Residues 66-74 (TMDEKIRDM) form a lipid binding region. The interval 78-101 (STAAVSTYVGIFTDQLLSLLKGED) is lipoprotein lipase cofactor.

Belongs to the apolipoprotein C2 family. Post-translationally, proapolipoprotein C-II is synthesized as a sialic acid containing glycoprotein which is subsequently desialylated prior to its proteolytic processing. In terms of processing, proapolipoprotein C-II, the major form found in plasma undergoes proteolytic cleavage of its N-terminal hexapeptide to generate apolipoprotein C-II, which occurs as the minor form in plasma.

It is found in the secreted. In terms of biological role, component of chylomicrons, very low-density lipoproteins (VLDL), low-density lipoproteins (LDL), and high-density lipoproteins (HDL) in plasma. Plays an important role in lipoprotein metabolism as an activator of lipoprotein lipase. Both proapolipoprotein C-II and apolipoprotein C-II can activate lipoprotein lipase. This chain is Apolipoprotein C-II (APOC2), found in Tapirus terrestris (Lowland tapir).